The chain runs to 133 residues: Ribosome-binding factor A (133 aa).

This sequence belongs to the RbfA family. In terms of assembly, monomer. Binds 30S ribosomal subunits, but not 50S ribosomal subunits or 70S ribosomes.

The protein resides in the cytoplasm. Its function is as follows. One of several proteins that assist in the late maturation steps of the functional core of the 30S ribosomal subunit. Associates with free 30S ribosomal subunits (but not with 30S subunits that are part of 70S ribosomes or polysomes). Required for efficient processing of 16S rRNA. May interact with the 5'-terminal helix region of 16S rRNA. This is Ribosome-binding factor A from Nostoc sp. (strain PCC 7120 / SAG 25.82 / UTEX 2576).